A 202-amino-acid polypeptide reads, in one-letter code: MQSRNLWRILGLCLLSVGAWGQDEDFKASDDLTSISPEKRFKVSISGTEVVVTCPDVFGYDNIKWEKNDNLVEGASNRELSQKEFSEVDDSGYYACYADSIKEKSYLYLRARVCANCIEVNLMAVVTIIVADICLTLGLLLMVYYWSKTRKANAKPVMRGTGAGSRPRGQNKEKPPPVPNPDYEPIRKGQQDLYSGLNQRGI.

The first 21 residues, 1–21 (MQSRNLWRILGLCLLSVGAWG), serve as a signal peptide directing secretion. The Extracellular portion of the chain corresponds to 22 to 122 (QDEDFKASDD…VCANCIEVNL (101 aa)). One can recognise an Ig-like domain in the interval 37-107 (PEKRFKVSIS…ADSIKEKSYL (71 aa)). Cys54 and Cys96 are joined by a disulfide. The chain crosses the membrane as a helical span at residues 123-143 (MAVVTIIVADICLTLGLLLMV). Residues 144 to 202 (YYWSKTRKANAKPVMRGTGAGSRPRGQNKEKPPPVPNPDYEPIRKGQQDLYSGLNQRGI) are Cytoplasmic-facing. The segment at 156–202 (PVMRGTGAGSRPRGQNKEKPPPVPNPDYEPIRKGQQDLYSGLNQRGI) is disordered. Positions 170–187 (QNKEKPPPVPNPDYEPIR) are NUMB-binding region. Residues 173–200 (EKPPPVPNPDYEPIRKGQQDLYSGLNQR) form the ITAM domain. Positions 174-181 (KPPPVPNP) are proline-rich sequence. 2 positions are modified to phosphotyrosine: Tyr183 and Tyr194. Over residues 192–202 (DLYSGLNQRGI) the composition is skewed to polar residues.

In terms of assembly, the TCR-CD3 complex is composed of a CD3D/CD3E and a CD3G/CD3E heterodimers that preferentially associate with TCRalpha and TCRbeta, respectively, to form TCRalpha/CD3E/CD3G and TCRbeta/CD3G/CD3E trimers. In turn, the hexamer interacts with CD3Z homodimer to form the TCR-CD3 complex. Alternatively, TCRalpha and TCRbeta can be replaced by TCRgamma and TCRdelta. Interacts with CD6. Interacts (via Proline-rich sequence) with NCK1; the interaction is ligand dependent but independent of tyrosine kinase activation. In terms of processing, phosphorylated on Tyr residues after T-cell receptor triggering by LCK in association with CD4/CD8.

It is found in the cell membrane. Functionally, part of the TCR-CD3 complex present on T-lymphocyte cell surface that plays an essential role in adaptive immune response. When antigen presenting cells (APCs) activate T-cell receptor (TCR), TCR-mediated signals are transmitted across the cell membrane by the CD3 chains CD3D, CD3E, CD3G and CD3Z. All CD3 chains contain immunoreceptor tyrosine-based activation motifs (ITAMs) in their cytoplasmic domain. Upon TCR engagement, these motifs become phosphorylated by Src family protein tyrosine kinases LCK and FYN, resulting in the activation of downstream signaling pathways. In addition of this role of signal transduction in T-cell activation, CD3E plays an essential role in correct T-cell development. Also participates in internalization and cell surface down-regulation of TCR-CD3 complexes via endocytosis sequences present in CD3E cytosolic region. In addition to its role as a TCR coreceptor, it serves as a receptor for ITPRIPL1. Ligand recognition inhibits T-cell activation by promoting interaction with NCK1, which prevents CD3E-ZAP70 interaction and blocks the ERK-NFkB signaling cascade and calcium influx. In Canis lupus familiaris (Dog), this protein is T-cell surface glycoprotein CD3 epsilon chain (CD3E).